A 250-amino-acid polypeptide reads, in one-letter code: Proteasome subunit alpha type-7-B (250 aa).

Lys62 participates in a covalent cross-link: Glycyl lysine isopeptide (Lys-Gly) (interchain with G-Cter in ubiquitin).

The protein belongs to the peptidase T1A family. As to quaternary structure, component of the 20S core complex of the 26S proteasome. The 26S proteasome is composed of a core protease (CP), known as the 20S proteasome, capped at one or both ends by the 19S regulatory particle (RP/PA700). The 20S proteasome core is composed of 28 subunits that are arranged in four stacked rings, resulting in a barrel-shaped structure. The two end rings are each formed by seven alpha subunits, and the two central rings are each formed by seven beta subunits. The catalytic chamber with the active sites is on the inside of the barrel.

The protein resides in the cytoplasm. The protein localises to the nucleus. The proteasome is a multicatalytic proteinase complex which is characterized by its ability to cleave peptides with Arg, Phe, Tyr, Leu, and Glu adjacent to the leaving group at neutral or slightly basic pH. The proteasome has an ATP-dependent proteolytic activity. The chain is Proteasome subunit alpha type-7-B (PAD2) from Arabidopsis thaliana (Mouse-ear cress).